Here is a 108-residue protein sequence, read N- to C-terminus: UPF0060 membrane protein Sputw3181_1172 (108 aa).

The next 4 helical transmembrane spans lie at 3–23 (VITT…GCYL), 31–51 (GASA…AWLL), 63–83 (AAYG…VDGI), and 87–107 (RWDL…MFAP).

This sequence belongs to the UPF0060 family.

It is found in the cell inner membrane. The chain is UPF0060 membrane protein Sputw3181_1172 from Shewanella sp. (strain W3-18-1).